We begin with the raw amino-acid sequence, 259 residues long: Acyl-[acyl-carrier-protein]--UDP-N-acetylglucosamine O-acyltransferase (259 aa).

Belongs to the transferase hexapeptide repeat family. LpxA subfamily. As to quaternary structure, homotrimer.

It is found in the cytoplasm. The enzyme catalyses a (3R)-hydroxyacyl-[ACP] + UDP-N-acetyl-alpha-D-glucosamine = a UDP-3-O-[(3R)-3-hydroxyacyl]-N-acetyl-alpha-D-glucosamine + holo-[ACP]. It functions in the pathway glycolipid biosynthesis; lipid IV(A) biosynthesis; lipid IV(A) from (3R)-3-hydroxytetradecanoyl-[acyl-carrier-protein] and UDP-N-acetyl-alpha-D-glucosamine: step 1/6. In terms of biological role, involved in the biosynthesis of lipid A, a phosphorylated glycolipid that anchors the lipopolysaccharide to the outer membrane of the cell. This chain is Acyl-[acyl-carrier-protein]--UDP-N-acetylglucosamine O-acyltransferase, found in Psychrobacter sp. (strain PRwf-1).